The following is a 362-amino-acid chain: N-acylethanolamine-hydrolyzing acid amidase (362 aa).

The signal sequence occupies residues 1–33 (MGTPAIRAACHGAHLALALLLLLSLSDPWLWAT). N-linked (GlcNAc...) asparagine glycosylation is found at Asn-42 and Asn-112. Cys-131 acts as the Nucleophile in catalysis. N-linked (GlcNAc...) asparagine glycans are attached at residues Asn-314 and Asn-338.

This sequence belongs to the acid ceramidase family. Heterodimer of an alpha and a beta subunit, produced by autocatalytic cleavage. In terms of processing, N-glycosylated. Tunicamycin treatment causes a reduction in specific activity against N-palmitoylethanolamine. Post-translationally, autoproteolytic cleavage at pH 4.5 gives rise to the alpha and beta subunit. Cleavage gives rise to a conformation change that activates the enzyme. The same catalytic Cys residue mediates the autoproteolytic cleavage and subsequent hydrolysis of lipid substrates. As to expression, expressed in brain, cecum, colon, heart, ileum, kidney, liver, lung, spleen, stomach, submaxillary gland, testis and thymus.

Its subcellular location is the lysosome. It is found in the membrane. It catalyses the reaction N-hexadecanoylethanolamine + H2O = ethanolamine + hexadecanoate. It carries out the reaction an N-(long-chain fatty acyl)ethanolamine + H2O = a long-chain fatty acid + ethanolamine. The enzyme catalyses N-dodecanoylethanolamine + H2O = dodecanoate + ethanolamine. The catalysed reaction is N-tetradecanoylethanolamine + H2O = tetradecanoate + ethanolamine. It catalyses the reaction an N-acylsphing-4-enine + H2O = sphing-4-enine + a fatty acid. It carries out the reaction N-hexadecanoylsphing-4-enine + H2O = sphing-4-enine + hexadecanoate. The enzyme catalyses N-dodecanoylsphing-4-enine + H2O = dodecanoate + sphing-4-enine. The protein operates within lipid metabolism; fatty acid metabolism. Its activity is regulated as follows. Stimulated by DTT. Stimulated by nonionic detergent of the polyoxyethylenep-t-octylphenylether type (Triton X-100 or Nonidet P-40) whereas 3-[(3-cholamidopropyl)dimethylammonio]propane-1-sulfonate (CHAPS) and octyl alpha-D-glucopyranoside decrease the N-(long-chain-acyl)ethanolamine deacylase activity. Polysorbate 20 (Tween 20) is inhibitory. Stimulated by endogenous phospholipids such as choline- or ethanolamine-containing phospholipids, and dihydrolipoic acid. Its function is as follows. Degrades bioactive fatty acid amides to their corresponding acids, with the following preference: N-palmitoylethanolamine &gt; N-myristoylethanolamine &gt; N-stearoylethanolamine &gt; N-oleoylethanolamine &gt; N-linoleoylethanolamine &gt; N-arachidonoylethanolamine. This is N-acylethanolamine-hydrolyzing acid amidase from Rattus norvegicus (Rat).